Reading from the N-terminus, the 103-residue chain is NADH-quinone oxidoreductase subunit K (103 aa).

Transmembrane regions (helical) follow at residues 4–24 (LTSY…GVIA), 28–48 (IFVI…FLIT), and 64–84 (MVIS…ILLF).

This sequence belongs to the complex I subunit 4L family. As to quaternary structure, NDH-1 is composed of 14 different subunits. Subunits NuoA, H, J, K, L, M, N constitute the membrane sector of the complex.

Its subcellular location is the cell inner membrane. It catalyses the reaction a quinone + NADH + 5 H(+)(in) = a quinol + NAD(+) + 4 H(+)(out). In terms of biological role, NDH-1 shuttles electrons from NADH, via FMN and iron-sulfur (Fe-S) centers, to quinones in the respiratory chain. The immediate electron acceptor for the enzyme in this species is believed to be ubiquinone. Couples the redox reaction to proton translocation (for every two electrons transferred, four hydrogen ions are translocated across the cytoplasmic membrane), and thus conserves the redox energy in a proton gradient. The chain is NADH-quinone oxidoreductase subunit K from Aliarcobacter butzleri (strain RM4018) (Arcobacter butzleri).